The following is a 411-amino-acid chain: Lissencephaly-1 homolog (411 aa).

The LisH domain maps to 9-41; that stretch reads QREELNQAIADYLGSNGYADSLEAFRKEADLST. A coiled-coil region spans residues 56–83; it reads TSVIRLQKKVMELEAKLTEAEKEVIEGA. WD repeat units follow at residues 106–147, 148–187, 191–230, 233–272, 275–334, 337–376, and 379–411; these read GHRA…RSLK, GHTDSVQDVAFDAQGKLLASCSADLSIKLWDFQQTYECVK, GHDHNVSSVAFVPAGDYVLSASRDRTVKMWEVATGYCVKT, GHREWVRMVRVHIEGSIFATCSNDHTIRVWLTNSRDCKVE, DHEH…CLFT, GHDNWVRGLAFHPAGKYLVSASDDKTIRVWDLRNKRCMKT, and AHQHFCTSIDFHKAHPYVISGSVDQTVKVWECR.

The protein belongs to the WD repeat LIS1/nudF family.

The protein localises to the cytoplasm. Its subcellular location is the cytoskeleton. The protein resides in the microtubule organizing center. It is found in the centrosome. In terms of biological role, positively regulates the activity of the minus-end directed microtubule motor protein dynein. May enhance dynein-mediated microtubule sliding by targeting dynein to the microtubule plus end. Required for several dynein- and microtubule-dependent processes. In Drosophila ananassae (Fruit fly), this protein is Lissencephaly-1 homolog.